Here is a 570-residue protein sequence, read N- to C-terminus: Sulfite reductase [NADPH] hemoprotein beta-component (570 aa).

C434, C440, C479, and C483 together coordinate [4Fe-4S] cluster. C483 serves as a coordination point for siroheme.

The protein belongs to the nitrite and sulfite reductase 4Fe-4S domain family. Alpha(8)-beta(8). The alpha component is a flavoprotein, the beta component is a hemoprotein. Requires siroheme as cofactor. It depends on [4Fe-4S] cluster as a cofactor.

It catalyses the reaction hydrogen sulfide + 3 NADP(+) + 3 H2O = sulfite + 3 NADPH + 4 H(+). Its pathway is sulfur metabolism; hydrogen sulfide biosynthesis; hydrogen sulfide from sulfite (NADPH route): step 1/1. In terms of biological role, component of the sulfite reductase complex that catalyzes the 6-electron reduction of sulfite to sulfide. This is one of several activities required for the biosynthesis of L-cysteine from sulfate. The polypeptide is Sulfite reductase [NADPH] hemoprotein beta-component (Salmonella newport (strain SL254)).